We begin with the raw amino-acid sequence, 473 residues long: Photosystem II CP43 reaction center protein (473 aa).

Positions 1 to 14 (MKTLYSLRRFYHVE) are excised as a propeptide. Threonine 15 bears the N-acetylthreonine mark. Threonine 15 carries the phosphothreonine modification. 5 consecutive transmembrane segments (helical) span residues 69 to 93 (LFEV…PHLA), 134 to 155 (LLGP…KDRN), 178 to 200 (KALY…RKIT), 255 to 275 (KPFA…LSYS), and 291 to 312 (WFNN…ASQA). Glutamate 367 serves as a coordination point for [CaMn4O5] cluster. Residues 447-471 (RARAAAAGFEKGIDRDFEPVLSMTP) form a helical membrane-spanning segment.

The protein belongs to the PsbB/PsbC family. PsbC subfamily. As to quaternary structure, PSII is composed of 1 copy each of membrane proteins PsbA, PsbB, PsbC, PsbD, PsbE, PsbF, PsbH, PsbI, PsbJ, PsbK, PsbL, PsbM, PsbT, PsbX, PsbY, PsbZ, Psb30/Ycf12, at least 3 peripheral proteins of the oxygen-evolving complex and a large number of cofactors. It forms dimeric complexes. Binds multiple chlorophylls and provides some of the ligands for the Ca-4Mn-5O cluster of the oxygen-evolving complex. It may also provide a ligand for a Cl- that is required for oxygen evolution. PSII binds additional chlorophylls, carotenoids and specific lipids. is required as a cofactor.

The protein resides in the plastid. The protein localises to the chloroplast thylakoid membrane. One of the components of the core complex of photosystem II (PSII). It binds chlorophyll and helps catalyze the primary light-induced photochemical processes of PSII. PSII is a light-driven water:plastoquinone oxidoreductase, using light energy to abstract electrons from H(2)O, generating O(2) and a proton gradient subsequently used for ATP formation. The sequence is that of Photosystem II CP43 reaction center protein from Arabis hirsuta (Hairy rock-cress).